A 325-amino-acid chain; its full sequence is Thioredoxin reductase (325 aa).

Residues 10–13, 39–40, Gln-44, Asn-53, Val-86, Cys-143, Asp-286, and 293–295 contribute to the FAD site; these read SGPS, IA, and RQA. Cys-140 and Cys-143 are joined by a disulfide.

This sequence belongs to the class-II pyridine nucleotide-disulfide oxidoreductase family. Homodimer. It depends on FAD as a cofactor.

The protein localises to the cytoplasm. It catalyses the reaction [thioredoxin]-dithiol + NADP(+) = [thioredoxin]-disulfide + NADPH + H(+). The chain is Thioredoxin reductase (TRR1) from Pneumocystis carinii.